Reading from the N-terminus, the 483-residue chain is Cobyric acid synthase (483 aa).

The GATase cobBQ-type domain maps to 251–438 (ALIVAVPMLP…LHGVFSADRF (188 aa)). The Nucleophile role is filled by Cys333. Residue His430 is part of the active site.

It belongs to the CobB/CobQ family. CobQ subfamily.

It participates in cofactor biosynthesis; adenosylcobalamin biosynthesis. Its function is as follows. Catalyzes amidations at positions B, D, E, and G on adenosylcobyrinic A,C-diamide. NH(2) groups are provided by glutamine, and one molecule of ATP is hydrogenolyzed for each amidation. In Brucella suis biovar 1 (strain 1330), this protein is Cobyric acid synthase.